The sequence spans 351 residues: S-adenosylmethionine:tRNA ribosyltransferase-isomerase (351 aa).

Belongs to the QueA family. Monomer.

Its subcellular location is the cytoplasm. The enzyme catalyses 7-aminomethyl-7-carbaguanosine(34) in tRNA + S-adenosyl-L-methionine = epoxyqueuosine(34) in tRNA + adenine + L-methionine + 2 H(+). Its pathway is tRNA modification; tRNA-queuosine biosynthesis. Its function is as follows. Transfers and isomerizes the ribose moiety from AdoMet to the 7-aminomethyl group of 7-deazaguanine (preQ1-tRNA) to give epoxyqueuosine (oQ-tRNA). The polypeptide is S-adenosylmethionine:tRNA ribosyltransferase-isomerase (Photobacterium profundum (strain SS9)).